Reading from the N-terminus, the 252-residue chain is Imidazole glycerol phosphate synthase subunit HisF (252 aa).

Active-site residues include D11 and D130.

The protein belongs to the HisA/HisF family. In terms of assembly, heterodimer of HisH and HisF.

It localises to the cytoplasm. It carries out the reaction 5-[(5-phospho-1-deoxy-D-ribulos-1-ylimino)methylamino]-1-(5-phospho-beta-D-ribosyl)imidazole-4-carboxamide + L-glutamine = D-erythro-1-(imidazol-4-yl)glycerol 3-phosphate + 5-amino-1-(5-phospho-beta-D-ribosyl)imidazole-4-carboxamide + L-glutamate + H(+). It participates in amino-acid biosynthesis; L-histidine biosynthesis; L-histidine from 5-phospho-alpha-D-ribose 1-diphosphate: step 5/9. In terms of biological role, IGPS catalyzes the conversion of PRFAR and glutamine to IGP, AICAR and glutamate. The HisF subunit catalyzes the cyclization activity that produces IGP and AICAR from PRFAR using the ammonia provided by the HisH subunit. This is Imidazole glycerol phosphate synthase subunit HisF from Geobacillus thermodenitrificans (strain NG80-2).